Here is a 155-residue protein sequence, read N- to C-terminus: Crossover junction endodeoxyribonuclease RuvC (155 aa).

Active-site residues include aspartate 7, glutamate 68, and aspartate 140. Positions 7, 68, and 140 each coordinate Mg(2+).

The protein belongs to the RuvC family. As to quaternary structure, homodimer which binds Holliday junction (HJ) DNA. The HJ becomes 2-fold symmetrical on binding to RuvC with unstacked arms; it has a different conformation from HJ DNA in complex with RuvA. In the full resolvosome a probable DNA-RuvA(4)-RuvB(12)-RuvC(2) complex forms which resolves the HJ. Mg(2+) serves as cofactor.

Its subcellular location is the cytoplasm. The enzyme catalyses Endonucleolytic cleavage at a junction such as a reciprocal single-stranded crossover between two homologous DNA duplexes (Holliday junction).. Its function is as follows. The RuvA-RuvB-RuvC complex processes Holliday junction (HJ) DNA during genetic recombination and DNA repair. Endonuclease that resolves HJ intermediates. Cleaves cruciform DNA by making single-stranded nicks across the HJ at symmetrical positions within the homologous arms, yielding a 5'-phosphate and a 3'-hydroxyl group; requires a central core of homology in the junction. The consensus cleavage sequence is 5'-(A/T)TT(C/G)-3'. Cleavage occurs on the 3'-side of the TT dinucleotide at the point of strand exchange. HJ branch migration catalyzed by RuvA-RuvB allows RuvC to scan DNA until it finds its consensus sequence, where it cleaves and resolves the cruciform DNA. The polypeptide is Crossover junction endodeoxyribonuclease RuvC (Prochlorococcus marinus (strain SARG / CCMP1375 / SS120)).